Consider the following 218-residue polypeptide: E3 ubiquitin-protein ligase MARCHF3 (218 aa).

The RING-CH-type zinc-finger motif lies at 63–123 (SPFNDRPMCR…ELCHFRFAVE (61 aa)). Residues Cys71, Cys74, Cys87, Cys89, His97, Cys100, Cys113, and Cys116 each coordinate Zn(2+). The next 2 helical transmembrane spans lie at 145–165 (LFGD…SGWL) and 180–200 (LEAV…LFWT).

Interacts with MARCHF2 and STX6.

It localises to the cytoplasmic vesicle membrane. The protein localises to the early endosome membrane. It carries out the reaction S-ubiquitinyl-[E2 ubiquitin-conjugating enzyme]-L-cysteine + [acceptor protein]-L-lysine = [E2 ubiquitin-conjugating enzyme]-L-cysteine + N(6)-ubiquitinyl-[acceptor protein]-L-lysine.. Its pathway is protein modification; protein ubiquitination. E3 ubiquitin-protein ligase which may be involved in endosomal trafficking. E3 ubiquitin ligases accept ubiquitin from an E2 ubiquitin-conjugating enzyme in the form of a thioester and then directly transfer the ubiquitin to targeted substrates. In Mus musculus (Mouse), this protein is E3 ubiquitin-protein ligase MARCHF3 (Marchf3).